The sequence spans 325 residues: MPGSPDPAPPELASVTARAPAKVNLLLQVGPRRDDGYHDLVTVFQAVSLHEEVTVTPADEFGITVEGVGGTDVGGVPLDGTNLALRAARLLAERAGVDRAVHVHVRKEVPVAGGMAGGSADAAAALVACDSLWRLRLGLDALAELGAELGSDVPFGLHGRTAVGTGRGEHLVPVLTGASSAWVFVLAEGGLSTPAVFAECDRRREATGHDAPPGRLEAVEAALRGGDVDALGAALSNDLQDAACALDPALAGTVAAGRRAGAVAGIVSGSGPTVALLARSPAAARRLALDLEPLFGAERLRTATGPAPGARVLEAVSTPSPGGRS.

Lysine 22 is a catalytic residue. 110–120 contacts ATP; the sequence is PVAGGMAGGSA. Aspartate 152 is an active-site residue. Residues 306-325 form a disordered region; it reads PAPGARVLEAVSTPSPGGRS.

It belongs to the GHMP kinase family. IspE subfamily.

It catalyses the reaction 4-CDP-2-C-methyl-D-erythritol + ATP = 4-CDP-2-C-methyl-D-erythritol 2-phosphate + ADP + H(+). Its pathway is isoprenoid biosynthesis; isopentenyl diphosphate biosynthesis via DXP pathway; isopentenyl diphosphate from 1-deoxy-D-xylulose 5-phosphate: step 3/6. Functionally, catalyzes the phosphorylation of the position 2 hydroxy group of 4-diphosphocytidyl-2C-methyl-D-erythritol. The chain is 4-diphosphocytidyl-2-C-methyl-D-erythritol kinase from Kineococcus radiotolerans (strain ATCC BAA-149 / DSM 14245 / SRS30216).